The primary structure comprises 242 residues: Large ribosomal subunit protein uL1 (242 aa).

Belongs to the universal ribosomal protein uL1 family. Part of the 50S ribosomal subunit.

In terms of biological role, binds directly to 23S rRNA. The L1 stalk is quite mobile in the ribosome, and is involved in E site tRNA release. Functionally, protein L1 is also a translational repressor protein, it controls the translation of the L11 operon by binding to its mRNA. This Wigglesworthia glossinidia brevipalpis protein is Large ribosomal subunit protein uL1.